A 201-amino-acid chain; its full sequence is MNPEYDYLFKLLLIGDSGVGKSCLLLRFADDTYTESYISTIGVDFKIRTIELDGKTIKLQIWDTAGQERFRTVTSSYYRGAHGIIVVYDVTDQESYANVKQWLQEIDRYASENVNKLLVGNKSDLTTKKVVDNTTAKEFADSLGVPFLETSAKNATNVEQAFMTMAAEIKKRMGPGAASGGERPNLKIDSTPVKSASGGCC.

Met1 bears the N-acetylmethionine mark. Positions 17, 18, 19, 20, 21, 22, 23, 33, 34, 35, 36, 39, and 40 each coordinate GTP. Ser22 is a Mg(2+) binding site. The short motif at 30–45 (DDTYTESYISTIGVDF) is the Switch 1 element. Thr40 and Asp63 together coordinate Mg(2+). A switch 2 region; required for interaction with REP1/CHM region spans residues 64–83 (TAGQERFRTVTSSYYRGAHG). A Switch 2 motif is present at residues 65-80 (AGQERFRTVTSSYYRG). Residues Gly66, Asn121, Lys122, Asp124, Ser151, Ala152, and Lys153 each contribute to the GTP site. The segment at 173–201 (MGPGAASGGERPNLKIDSTPVKSASGGCC) is disordered. S-geranylgeranyl cysteine attachment occurs at residues Cys200 and Cys201. A Cysteine methyl ester modification is found at Cys201.

The protein belongs to the small GTPase superfamily. Rab family. In terms of assembly, interacts with MICAL1 and MICAL2. Interacts (in GTP-bound form) with MICALCL, MICAL1 and MILCAL3. Interacts with GDI1; the interaction requires the GDP-bound state. Interacts with CHM/REP1; the interaction requires the GDP-bound form and is necessary for prenylation by GGTase II. Interacts with RabGAP TBC1D20. Interacts (in GDP-bound form) with lipid phosphatase MTMR6 (via GRAM domain); the interaction regulates MTMR6 recruitment to the endoplasmic reticulum-Golgi intermediate compartment. Interacts (in GDP-bound form) with lipid phosphatase MTMR7. The cofactor is Mg(2+). In terms of processing, prenylated; by GGTase II, only after interaction of the substrate with Rab escort protein 1 (REP1).

It is found in the cytoplasm. Its subcellular location is the membrane. It localises to the preautophagosomal structure membrane. The protein localises to the perinuclear region. It catalyses the reaction GTP + H2O = GDP + phosphate + H(+). Its activity is regulated as follows. Regulated by guanine nucleotide exchange factors (GEFs) which promote the exchange of bound GDP for free GTP. Regulated by GTPase activating proteins (GAPs) including TBC1D20 which increases the GTP hydrolysis activity. Inhibited by GDP dissociation inhibitors (GDIs). The small GTPases Rab are key regulators of intracellular membrane trafficking, from the formation of transport vesicles to their fusion with membranes. Rabs cycle between an inactive GDP-bound form and an active GTP-bound form that is able to recruit to membranes different set of downstream effectors directly responsible for vesicle formation, movement, tethering and fusion. Plays a role in the initial events of the autophagic vacuole development which take place at specialized regions of the endoplasmic reticulum. Regulates vesicular transport between the endoplasmic reticulum and successive Golgi compartments. Required to modulate the compacted morphology of the Golgi. Promotes the recruitment of lipid phosphatase MTMR6 to the endoplasmic reticulum-Golgi intermediate compartment. The sequence is that of Ras-related protein Rab-1B (Rab1b) from Rattus norvegicus (Rat).